A 244-amino-acid chain; its full sequence is Large ribosomal subunit protein uL2 (244 aa).

Over residues 1-12 (MGKRILVQRRGR) the composition is skewed to basic residues. Disordered regions lie at residues 1 to 26 (MGKR…KRDG) and 193 to 225 (AMSP…KVGF).

The protein belongs to the universal ribosomal protein uL2 family. As to quaternary structure, part of the 50S ribosomal subunit. Forms a bridge to the 30S subunit in the 70S ribosome.

One of the primary rRNA binding proteins. Required for association of the 30S and 50S subunits to form the 70S ribosome, for tRNA binding and peptide bond formation. It has been suggested to have peptidyltransferase activity; this is somewhat controversial. Makes several contacts with the 16S rRNA in the 70S ribosome. This Pyrobaculum calidifontis (strain DSM 21063 / JCM 11548 / VA1) protein is Large ribosomal subunit protein uL2.